A 194-amino-acid polypeptide reads, in one-letter code: A-type ATP synthase subunit E (194 aa).

The protein belongs to the V-ATPase E subunit family. In terms of assembly, has multiple subunits with at least A(3), B(3), C, D, E, F, H, I and proteolipid K(x).

Its subcellular location is the cell membrane. Functionally, component of the A-type ATP synthase that produces ATP from ADP in the presence of a proton gradient across the membrane. The sequence is that of A-type ATP synthase subunit E from Haloferax volcanii (strain ATCC 29605 / DSM 3757 / JCM 8879 / NBRC 14742 / NCIMB 2012 / VKM B-1768 / DS2) (Halobacterium volcanii).